The chain runs to 236 residues: MDIKLKDFEGPLDLLLHLVSKYQVDIYDVPITEVIEQYLAYVATLQAMKLEVTGEYMVMASQLMLIKSRKLLPKVADNAELEDDLEQDLLSQIEEYRRFKLLGEKMSLQHDDRALYYSKPKLELVYEDAELLHDKSTIDLFLAFSKVIAKKQEEFSKSHTTIVRDEYKIEDMMEVVRQRCAGKSRLALQEIFAETKDMNEVITLFLATLELVKVQEVQVIQEENFGNIYLVGRGNE.

This sequence belongs to the ScpA family. In terms of assembly, component of a cohesin-like complex composed of ScpA, ScpB and the Smc homodimer, in which ScpA and ScpB bind to the head domain of Smc. The presence of the three proteins is required for the association of the complex with DNA.

The protein localises to the cytoplasm. In terms of biological role, participates in chromosomal partition during cell division. May act via the formation of a condensin-like complex containing Smc and ScpB that pull DNA away from mid-cell into both cell halves. The polypeptide is Segregation and condensation protein A (Streptococcus sanguinis (strain SK36)).